Reading from the N-terminus, the 476-residue chain is Cytosolic iron-sulfur assembly component 3 (476 aa).

N-acetylalanine is present on Ala-2. 8 residues coordinate [4Fe-4S] cluster: Cys-24, Cys-71, Cys-74, Cys-77, Cys-190, Cys-246, Cys-395, and Cys-399.

It belongs to the NARF family. In terms of assembly, external component of the CIA complex. In the CIA complex, interacts directly with CIAO1 and MMS19.

Component of the cytosolic iron-sulfur protein assembly (CIA) complex, a multiprotein complex that mediates the incorporation of iron-sulfur cluster into extramitochondrial Fe/S proteins. Seems to negatively regulate the level of HIF1A expression, although this effect could be indirect. This is Cytosolic iron-sulfur assembly component 3 from Rattus norvegicus (Rat).